A 195-amino-acid polypeptide reads, in one-letter code: Capsid protein (195 aa).

Residues Asn148–Cys195 form a disordered region. A compositionally biased stretch (basic residues) spans Val161–Ser188. Residues Ser167, Ser174, and Ser182 each carry the phosphoserine; by host modification. A 1; half-length repeat occupies Ser167 to Thr172. A 3 X 7 AA repeats of S-P-R-R-R-[PR]-S region spans residues Ser167–Ser188. Positions Arg170 to Arg187 match the Bipartite nuclear localization signal motif. Tandem repeats lie at residues Ser174–Ser180 and Ser182–Ser188. An RNA binding region spans residues Ala189–Cys195.

It belongs to the orthohepadnavirus core antigen family. Homodimerizes, then multimerizes. Interacts with cytosol exposed regions of viral L glycoprotein present in the reticulum-to-Golgi compartment. Interacts with human FLNB. Phosphorylated form interacts with host importin alpha; this interaction depends on the exposure of the NLS, which itself depends upon genome maturation and/or phosphorylation of the capsid protein. Interacts with host NUP153. In terms of processing, phosphorylated by host SRPK1, SRPK2, and maybe protein kinase C or GAPDH. Phosphorylation is critical for pregenomic RNA packaging. Protein kinase C phosphorylation is stimulated by HBx protein and may play a role in transport of the viral genome to the nucleus at the late step during the viral replication cycle.

Its subcellular location is the virion. The protein localises to the host cytoplasm. Its function is as follows. Self assembles to form an icosahedral capsid. Most capsids appear to be large particles with an icosahedral symmetry of T=4 and consist of 240 copies of capsid protein, though a fraction forms smaller T=3 particles consisting of 180 capsid proteins. Entering capsids are transported along microtubules to the nucleus. Phosphorylation of the capsid is thought to induce exposure of nuclear localization signal in the C-terminal portion of the capsid protein that allows binding to the nuclear pore complex via the importin (karyopherin-) alpha and beta. Capsids are imported in intact form through the nuclear pore into the nuclear basket, where it probably binds NUP153. Only capsids that contain the mature viral genome can release the viral DNA and capsid protein into the nucleoplasm. Immature capsids get stuck in the basket. Capsids encapsulate the pre-genomic RNA and the P protein. Pre-genomic RNA is reverse-transcribed into DNA while the capsid is still in the cytoplasm. The capsid can then either be directed to the nucleus, providing more genomes for transcription, or bud through the endoplasmic reticulum to provide new virions. The chain is Capsid protein from Hepatitis B virus genotype G (isolate United States/USG17/2002) (HBV-G).